Here is a 173-residue protein sequence, read N- to C-terminus: DRBM domain-containing protein 340R (173 aa).

The region spanning 30-102 is the DRBM domain; sequence NSIGFLNEFC…AFKTIKELNL (73 aa).

This chain is DRBM domain-containing protein 340R, found in Invertebrate iridescent virus 6 (IIV-6).